A 298-amino-acid chain; its full sequence is ATP phosphoribosyltransferase (298 aa).

Belongs to the ATP phosphoribosyltransferase family. Long subfamily. Mg(2+) is required as a cofactor.

The protein resides in the cytoplasm. It carries out the reaction 1-(5-phospho-beta-D-ribosyl)-ATP + diphosphate = 5-phospho-alpha-D-ribose 1-diphosphate + ATP. It functions in the pathway amino-acid biosynthesis; L-histidine biosynthesis; L-histidine from 5-phospho-alpha-D-ribose 1-diphosphate: step 1/9. With respect to regulation, feedback inhibited by histidine. Catalyzes the condensation of ATP and 5-phosphoribose 1-diphosphate to form N'-(5'-phosphoribosyl)-ATP (PR-ATP). Has a crucial role in the pathway because the rate of histidine biosynthesis seems to be controlled primarily by regulation of HisG enzymatic activity. This chain is ATP phosphoribosyltransferase, found in Aeromonas hydrophila subsp. hydrophila (strain ATCC 7966 / DSM 30187 / BCRC 13018 / CCUG 14551 / JCM 1027 / KCTC 2358 / NCIMB 9240 / NCTC 8049).